Here is a 452-residue protein sequence, read N- to C-terminus: Exodeoxyribonuclease 7 large subunit (452 aa).

The protein belongs to the XseA family. Heterooligomer composed of large and small subunits.

It localises to the cytoplasm. It carries out the reaction Exonucleolytic cleavage in either 5'- to 3'- or 3'- to 5'-direction to yield nucleoside 5'-phosphates.. Bidirectionally degrades single-stranded DNA into large acid-insoluble oligonucleotides, which are then degraded further into small acid-soluble oligonucleotides. The chain is Exodeoxyribonuclease 7 large subunit from Bacillus mycoides (strain KBAB4) (Bacillus weihenstephanensis).